Consider the following 710-residue polypeptide: ARM REPEAT PROTEIN INTERACTING WITH ABF2 (710 aa).

The tract at residues 1–35 (MDQQPERREGRSFPERKGQKRKLEEGAAAVEDREI) is disordered. ARM repeat units follow at residues 85–127 (EDLV…EKGS), 138–185 (PEYQ…NLAH), 188–227 (SSIK…TLAF), 230–269 (DDNK…NLVH), 272–311 (PHIK…QFAS), 314–353 (SDCK…RLAQ), 355–394 (AHNQ…GLAD), 429–468 (LKRL…HLCS), and 470–509 (EDQR…KLAN). One can recognise a BTB domain in the interval 541–608 (SDVTFLVEGR…IYTGSVDITN (68 aa)).

In terms of assembly, interacts with ABF2. Interacts with DUF7/AIP1. In terms of tissue distribution, detected in embryos and most of the vegetative and reproductive organs.

The protein localises to the nucleus. It functions in the pathway protein modification; protein ubiquitination. May act as a substrate-specific adapter of an E3 ubiquitin-protein ligase complex (CUL3-RBX1-BTB) which mediates the ubiquitination and subsequent proteasomal degradation of target proteins. Acts as a positive regulator of ABA response via the modulation of the transcriptional activity of ABF2, a transcription factor which controls ABA-dependent gene expression via the G-box-type ABA-responsive elements. Negative regulator of seed germination and young seedling growth. This Arabidopsis thaliana (Mouse-ear cress) protein is ARM REPEAT PROTEIN INTERACTING WITH ABF2 (ARIA).